The primary structure comprises 290 residues: tRNA-cytidine(32) 2-sulfurtransferase (290 aa).

The short motif at 36–41 (SGGKDS) is the PP-loop motif element. Positions 111, 114, and 202 each coordinate [4Fe-4S] cluster. The segment at 259–290 (DPWLDAEDEEAEDCGEPAGDGVVSLGGARGGR) is disordered. The span at 262 to 273 (LDAEDEEAEDCG) shows a compositional bias: acidic residues.

Belongs to the TtcA family. Homodimer. Requires Mg(2+) as cofactor. It depends on [4Fe-4S] cluster as a cofactor.

Its subcellular location is the cytoplasm. It catalyses the reaction cytidine(32) in tRNA + S-sulfanyl-L-cysteinyl-[cysteine desulfurase] + AH2 + ATP = 2-thiocytidine(32) in tRNA + L-cysteinyl-[cysteine desulfurase] + A + AMP + diphosphate + H(+). The protein operates within tRNA modification. Functionally, catalyzes the ATP-dependent 2-thiolation of cytidine in position 32 of tRNA, to form 2-thiocytidine (s(2)C32). The sulfur atoms are provided by the cysteine/cysteine desulfurase (IscS) system. The sequence is that of tRNA-cytidine(32) 2-sulfurtransferase from Anaeromyxobacter dehalogenans (strain 2CP-C).